Here is a 318-residue protein sequence, read N- to C-terminus: Nucleotide-binding protein Jann_0539 (318 aa).

17 to 24 contacts ATP; sequence GPSGAGRS. 64–67 is a binding site for GTP; it reads DPRT. Residues 278–318 form a disordered region; it reads GWQVSKRHRDVDKDASENSDRDRGASARTAASTDDGEAEQP. Basic and acidic residues predominate over residues 286 to 302; the sequence is RDVDKDASENSDRDRGA.

Belongs to the RapZ-like family.

Displays ATPase and GTPase activities. This Jannaschia sp. (strain CCS1) protein is Nucleotide-binding protein Jann_0539.